We begin with the raw amino-acid sequence, 84 residues long: Cell division topological specificity factor (84 aa).

Belongs to the MinE family.

In terms of biological role, prevents the cell division inhibition by proteins MinC and MinD at internal division sites while permitting inhibition at polar sites. This ensures cell division at the proper site by restricting the formation of a division septum at the midpoint of the long axis of the cell. This Paraburkholderia xenovorans (strain LB400) protein is Cell division topological specificity factor.